The chain runs to 232 residues: Large ribosomal subunit protein uL1 (232 aa).

The protein belongs to the universal ribosomal protein uL1 family. As to quaternary structure, part of the 50S ribosomal subunit.

In terms of biological role, binds directly to 23S rRNA. The L1 stalk is quite mobile in the ribosome, and is involved in E site tRNA release. Protein L1 is also a translational repressor protein, it controls the translation of the L11 operon by binding to its mRNA. This Burkholderia lata (strain ATCC 17760 / DSM 23089 / LMG 22485 / NCIMB 9086 / R18194 / 383) protein is Large ribosomal subunit protein uL1.